Here is a 795-residue protein sequence, read N- to C-terminus: Delta-1-pyrroline-5-carboxylate synthase (795 aa).

Positions 1–361 (MLSQVYRCGF…FFSEVKPAGP (361 aa)) are glutamate 5-kinase. 3 residues coordinate substrate: S117, D223, and N246. ATP is bound by residues 266–267 (SD) and 305–311 (MGGMEAK). 3 positions are modified to N6-succinyllysine: K311, K347, and K550. The interval 362-795 (TVEQQGEMAR…NLPIPQRNTN (434 aa)) is gamma-glutamyl phosphate reductase.

This sequence in the N-terminal section; belongs to the glutamate 5-kinase family. The protein in the C-terminal section; belongs to the gamma-glutamyl phosphate reductase family. Can form homodimers/multimers.

It localises to the mitochondrion. The protein resides in the mitochondrion matrix. It catalyses the reaction L-glutamate + ATP = L-glutamyl 5-phosphate + ADP. The catalysed reaction is L-glutamate 5-semialdehyde + phosphate + NADP(+) = L-glutamyl 5-phosphate + NADPH + H(+). The protein operates within amino-acid biosynthesis; L-proline biosynthesis; L-glutamate 5-semialdehyde from L-glutamate: step 1/2. Its pathway is amino-acid biosynthesis; L-proline biosynthesis; L-glutamate 5-semialdehyde from L-glutamate: step 2/2. Its activity is regulated as follows. Isoform Short: Inhibited by L-ornithine with a Ki of approximately 0.25 mm. Isoform Long: Insensitive to ornithine inhibition. This is due to the two amino acid insert which abolishes feedback inhibition of P5CS activity by L-ornithine. Functionally, bifunctional enzyme that converts glutamate to glutamate 5-semialdehyde, an intermediate in the biosynthesis of proline, ornithine and arginine. The polypeptide is Delta-1-pyrroline-5-carboxylate synthase (ALDH18A1) (Homo sapiens (Human)).